Reading from the N-terminus, the 108-residue chain is Ribonuclease P protein component 4 (108 aa).

4 residues coordinate Zn(2+): cysteine 60, cysteine 63, cysteine 86, and cysteine 89.

It belongs to the eukaryotic/archaeal RNase P protein component 4 family. In terms of assembly, consists of a catalytic RNA component and at least 4-5 protein subunits. Zn(2+) is required as a cofactor.

The protein resides in the cytoplasm. The catalysed reaction is Endonucleolytic cleavage of RNA, removing 5'-extranucleotides from tRNA precursor.. Its function is as follows. Part of ribonuclease P, a protein complex that generates mature tRNA molecules by cleaving their 5'-ends. The sequence is that of Ribonuclease P protein component 4 from Sulfurisphaera tokodaii (strain DSM 16993 / JCM 10545 / NBRC 100140 / 7) (Sulfolobus tokodaii).